The following is a 947-amino-acid chain: Glutamate receptor 2.8 (947 aa).

An N-terminal signal peptide occupies residues 1-26 (MNPKKNNNTFLSYFVCLFLLLEVGLG). The Extracellular portion of the chain corresponds to 27 to 577 (QNQISEIKVG…NTWVFLKPWG (551 aa)). Asn-42, Asn-118, Asn-333, Asn-341, Asn-348, Asn-420, Asn-478, and Asn-524 each carry an N-linked (GlcNAc...) asparagine glycan. Residues 578 to 598 (LDLWVTTACFFVLIGFVVWLF) traverse the membrane as a helical segment. Over 599-607 (EHRVNTDFR) the chain is Cytoplasmic. A helical transmembrane segment spans residues 608 to 628 (GPPHHQIGTSFWFSFSTMVFA). Residues 629-632 (HREK) lie on the Cytoplasmic side of the membrane. The helical transmembrane segment at 633 to 653 (VVSNLARFVVVVWCFVVLVLT) threads the bilayer. Topologically, residues 654-819 (QSYTANLTSF…NRLSLRSFWG (166 aa)) are extracellular. N-linked (GlcNAc...) asparagine glycosylation is found at Asn-659, Asn-704, Asn-723, and Asn-779. A helical membrane pass occupies residues 820-840 (LFLIAGIASFLALLIFVFLFL). The Cytoplasmic portion of the chain corresponds to 841–947 (YENRHTLCDD…ESDIECVVEQ (107 aa)).

Belongs to the glutamate-gated ion channel (TC 1.A.10.1) family. May form heteromers. In terms of tissue distribution, expressed predominantly in leaves.

The protein resides in the membrane. In terms of biological role, glutamate-gated receptor that probably acts as a non-selective cation channel. May be involved in light-signal transduction and calcium homeostasis via the regulation of calcium influx into cells. The sequence is that of Glutamate receptor 2.8 (GLR2.8) from Arabidopsis thaliana (Mouse-ear cress).